A 232-amino-acid chain; its full sequence is Ribonuclease 3 (232 aa).

The RNase III domain occupies 10–135 (ALKIYEATGY…LIGAMYMDGG (126 aa)). Glu-48 lines the Mg(2+) pocket. Residue Asp-52 is part of the active site. Mg(2+)-binding residues include Asn-121 and Glu-124. Glu-124 is an active-site residue. The DRBM domain maps to 161-230 (DPKTALQEWV…AKLMLKKITE (70 aa)).

The protein belongs to the ribonuclease III family. In terms of assembly, homodimer. It depends on Mg(2+) as a cofactor.

It is found in the cytoplasm. The catalysed reaction is Endonucleolytic cleavage to 5'-phosphomonoester.. Digests double-stranded RNA. Involved in the processing of primary rRNA transcript to yield the immediate precursors to the large and small rRNAs (23S and 16S). Processes some mRNAs, and tRNAs when they are encoded in the rRNA operon. Processes pre-crRNA and tracrRNA of type II CRISPR loci if present in the organism. The protein is Ribonuclease 3 of Anaplasma marginale (strain Florida).